The sequence spans 309 residues: 15-cis-phytoene synthase (309 aa).

The segment at leucine 290–leucine 309 is disordered.

It belongs to the phytoene/squalene synthase family. Requires ATP as cofactor. The cofactor is Mn(2+). Mg(2+) is required as a cofactor.

The enzyme catalyses 2 (2E,6E,10E)-geranylgeranyl diphosphate = 15-cis-phytoene + 2 diphosphate. It participates in carotenoid biosynthesis; phytoene biosynthesis. Inhibited by phosphate ions and squalestatin. In terms of biological role, involved in the biosynthesis of carotenoids. Catalyzes the condensation of two molecules of geranylgeranyl diphosphate (GGPP) to give prephytoene diphosphate (PPPP) and the subsequent rearrangement of the cyclopropylcarbinyl intermediate to yield the 15-cis-phytoene isomer. In Pantoea ananas (Erwinia uredovora), this protein is 15-cis-phytoene synthase (crtB).